Here is a 336-residue protein sequence, read N- to C-terminus: ATP-dependent 6-phosphofructokinase 3 (336 aa).

ATP is bound by residues glycine 10, 72 to 73 (RE), and 108 to 111 (GNGT). Asparagine 109 contributes to the Mg(2+) binding site. Residues 131 to 133 (TID), arginine 168, 175 to 177 (MGH), glutamate 228, arginine 255, and 261 to 264 (YIQR) each bind substrate. Catalysis depends on aspartate 133, which acts as the Proton acceptor.

Belongs to the phosphofructokinase type A (PFKA) family. Mixed-substrate PFK group III subfamily. In terms of assembly, homodimer or homotetramer. It depends on Mg(2+) as a cofactor.

Its subcellular location is the cytoplasm. It carries out the reaction beta-D-fructose 6-phosphate + ATP = beta-D-fructose 1,6-bisphosphate + ADP + H(+). It functions in the pathway carbohydrate degradation; glycolysis; D-glyceraldehyde 3-phosphate and glycerone phosphate from D-glucose: step 3/4. Catalyzes the phosphorylation of D-fructose 6-phosphate to fructose 1,6-bisphosphate by ATP, the first committing step of glycolysis. The protein is ATP-dependent 6-phosphofructokinase 3 of Bacteroides thetaiotaomicron (strain ATCC 29148 / DSM 2079 / JCM 5827 / CCUG 10774 / NCTC 10582 / VPI-5482 / E50).